We begin with the raw amino-acid sequence, 152 residues long: MAKMHTKRKGKSSSTRPNRTEPPEWCKIGADEVTTITLDLWKQGVSTSEIGMILRDRYGVPDAKLVTGKKITTILKENNVAPNLPEDLTNLIVKALGLRKHLSTNKKDVHNKRALNLTESKIRRLVKYYKQEKVLPRDWFYKPETAEMMITR.

Positions 1–11 (MAKMHTKRKGK) are enriched in basic residues. The disordered stretch occupies residues 1-24 (MAKMHTKRKGKSSSTRPNRTEPPE).

Belongs to the universal ribosomal protein uS15 family. In terms of assembly, part of the 30S ribosomal subunit.

This is Small ribosomal subunit protein uS15 from Methanosarcina mazei (strain ATCC BAA-159 / DSM 3647 / Goe1 / Go1 / JCM 11833 / OCM 88) (Methanosarcina frisia).